Reading from the N-terminus, the 82-residue chain is VPANAVTESDPAAVALKYHRDAASSERVAAARPGLPPEEQHCENCQFMNPDSAAADWKGCQLFPGKLINLSGWCASWTLRAG.

[4Fe-4S] cluster-binding residues include Cys42, Cys45, Cys60, and Cys74.

The protein belongs to the high-potential iron-sulfur protein (HiPIP) family. As to quaternary structure, homodimer.

Its subcellular location is the periplasm. In terms of biological role, specific class of high-redox-potential 4Fe-4S ferredoxins. Functions in anaerobic electron transport in most purple and in some other photosynthetic bacteria and in at least one genus (Paracoccus) of halophilic, denitrifying bacteria. In Marichromatium purpuratum (Chromatium purpuratum), this protein is High-potential iron-sulfur protein (hip).